A 282-amino-acid polypeptide reads, in one-letter code: Lipoyl synthase (282 aa).

7 residues coordinate [4Fe-4S] cluster: C37, C42, C48, C63, C67, C70, and S275. The region spanning 49-264 is the Radical SAM core domain; it reads WSRGTATFMI…RLVGIEKGFR (216 aa).

The protein belongs to the radical SAM superfamily. Lipoyl synthase family. Requires [4Fe-4S] cluster as cofactor.

It is found in the cytoplasm. The enzyme catalyses [[Fe-S] cluster scaffold protein carrying a second [4Fe-4S](2+) cluster] + N(6)-octanoyl-L-lysyl-[protein] + 2 oxidized [2Fe-2S]-[ferredoxin] + 2 S-adenosyl-L-methionine + 4 H(+) = [[Fe-S] cluster scaffold protein] + N(6)-[(R)-dihydrolipoyl]-L-lysyl-[protein] + 4 Fe(3+) + 2 hydrogen sulfide + 2 5'-deoxyadenosine + 2 L-methionine + 2 reduced [2Fe-2S]-[ferredoxin]. It functions in the pathway protein modification; protein lipoylation via endogenous pathway; protein N(6)-(lipoyl)lysine from octanoyl-[acyl-carrier-protein]: step 2/2. Its function is as follows. Catalyzes the radical-mediated insertion of two sulfur atoms into the C-6 and C-8 positions of the octanoyl moiety bound to the lipoyl domains of lipoate-dependent enzymes, thereby converting the octanoylated domains into lipoylated derivatives. The sequence is that of Lipoyl synthase from Porphyromonas gingivalis (strain ATCC 33277 / DSM 20709 / CIP 103683 / JCM 12257 / NCTC 11834 / 2561).